The chain runs to 405 residues: Cysteine desulfurase IscS (405 aa).

Residues 75–76, N156, Q184, and 204–206 contribute to the pyridoxal 5'-phosphate site; these read AT and SAH. The residue at position 207 (K207) is an N6-(pyridoxal phosphate)lysine. T244 lines the pyridoxal 5'-phosphate pocket. The Cysteine persulfide intermediate role is filled by C329. C329 is a [2Fe-2S] cluster binding site.

This sequence belongs to the class-V pyridoxal-phosphate-dependent aminotransferase family. NifS/IscS subfamily. As to quaternary structure, homodimer. Forms a heterotetramer with IscU, interacts with other sulfur acceptors. The cofactor is pyridoxal 5'-phosphate.

It is found in the cytoplasm. The enzyme catalyses (sulfur carrier)-H + L-cysteine = (sulfur carrier)-SH + L-alanine. It functions in the pathway cofactor biosynthesis; iron-sulfur cluster biosynthesis. Functionally, master enzyme that delivers sulfur to a number of partners involved in Fe-S cluster assembly, tRNA modification or cofactor biosynthesis. Catalyzes the removal of elemental sulfur atoms from cysteine to produce alanine. Functions as a sulfur delivery protein for Fe-S cluster synthesis onto IscU, an Fe-S scaffold assembly protein, as well as other S acceptor proteins. This is Cysteine desulfurase IscS from Methylobacillus flagellatus (strain ATCC 51484 / DSM 6875 / VKM B-1610 / KT).